Consider the following 264-residue polypeptide: Tryptophan synthase alpha chain (264 aa).

Catalysis depends on proton acceptor residues glutamate 49 and aspartate 60.

This sequence belongs to the TrpA family. In terms of assembly, tetramer of two alpha and two beta chains.

The enzyme catalyses (1S,2R)-1-C-(indol-3-yl)glycerol 3-phosphate + L-serine = D-glyceraldehyde 3-phosphate + L-tryptophan + H2O. It functions in the pathway amino-acid biosynthesis; L-tryptophan biosynthesis; L-tryptophan from chorismate: step 5/5. In terms of biological role, the alpha subunit is responsible for the aldol cleavage of indoleglycerol phosphate to indole and glyceraldehyde 3-phosphate. The sequence is that of Tryptophan synthase alpha chain from Laribacter hongkongensis (strain HLHK9).